The sequence spans 387 residues: Protein salvador homolog 1 (387 aa).

2 positions are modified to phosphoserine: Ser95 and Ser138. WW domains are found at residues Leu201–Glu234 and Glu236–Ala269. A Phosphothreonine modification is found at Thr212. Residues Ile323 to Arg370 form the SARAH domain.

As to quaternary structure, homodimer. Stabilized through interaction with STK3/MST2 or STK4/MST1. Interacts (via SARAH domain) with isoform 1 of NEK2. Interacts with ESR1 only in the presence of STK3/MST2. Interacts with WTIP and AJUBA. Phosphorylated by STK3/MST2 and STK4/MST1. Phosphorylation is not required for SAV1 stability and may increase the number of protein binding sites on the scaffold molecule.

It localises to the nucleus. The protein resides in the cytoplasm. Its function is as follows. Regulator of STK3/MST2 and STK4/MST1 in the Hippo signaling pathway which plays a pivotal role in organ size control and tumor suppression by restricting proliferation and promoting apoptosis. The core of this pathway is composed of a kinase cascade wherein STK3/MST2 and STK4/MST1, in complex with its regulatory protein SAV1, phosphorylates and activates LATS1/2 in complex with its regulatory protein MOB1, which in turn phosphorylates and inactivates YAP1 oncoprotein and WWTR1/TAZ. Phosphorylation of YAP1 by LATS1/2 inhibits its translocation into the nucleus to regulate cellular genes important for cell proliferation, cell death, and cell migration. SAV1 is required for STK3/MST2 and STK4/MST1 activation and promotes cell-cycle exit and terminal differentiation in developing epithelial tissues. Plays a role in centrosome disjunction by regulating the localization of NEK2 to centrosomes, and its ability to phosphorylate CROCC and CEP250. In conjunction with STK3/MST2, activates the transcriptional activity of ESR1 through the modulation of its phosphorylation. In Rattus norvegicus (Rat), this protein is Protein salvador homolog 1.